The sequence spans 474 residues: MVMASAGVNMPGGDGDHPPAAAQECHRLRRRRYVPAAAAASEDGDNSSNGGGEKRSLPASSASPSPSPTSSAASSDCSSDRDDDGCSSTAGAAARRLPLPSGASTAAAVWPVAFGSVSLAGRMRDMEDAVSLRPSFCTWLDGSPMHFFAVFDGHGGPHVSALCREQMHVIVAEEMVAEAAALRQRQPAAMEEEEEERAVAGGAVAELRPGGRAGGGGVRVRARHRAGVPCPLSGQTGAIIGSTAVVALLVRDRLVVSNCGDSRAVLCRAGDPLPLSSDHKGLNPSLSWRGTRVALARGTWGDKTGQSVGPAALLLSGGAHPDRPDEKARIEAVGGRVVYLNGPRVRGILAMSRALGDKYLKPEVICEPDITITVRTVDDECLILASDGMWDVISNETASDVARQCLEDGSPTSGRRAARSGEAASSSAGAPAAAVGQESEPRCYRAAALLARLALGRESSDNISVVVIDLKGRG.

Residues 1 to 90 are disordered; it reads MVMASAGVNM…RDDDGCSSTA (90 aa). Residues 57–77 show a composition bias toward low complexity; it reads LPASSASPSPSPTSSAASSDC. A PPM-type phosphatase domain is found at 113–470; the sequence is AFGSVSLAGR…DNISVVVIDL (358 aa). Mn(2+)-binding residues include aspartate 152, glycine 153, and aspartate 387. The tract at residues 406 to 434 is disordered; it reads LEDGSPTSGRRAARSGEAASSSAGAPAAA. The segment covering 420 to 434 has biased composition (low complexity); it reads SGEAASSSAGAPAAA. Aspartate 461 is a binding site for Mn(2+).

The protein belongs to the PP2C family. The cofactor is Mg(2+). Mn(2+) serves as cofactor.

It carries out the reaction O-phospho-L-seryl-[protein] + H2O = L-seryl-[protein] + phosphate. The catalysed reaction is O-phospho-L-threonyl-[protein] + H2O = L-threonyl-[protein] + phosphate. In Oryza sativa subsp. japonica (Rice), this protein is Probable protein phosphatase 2C 37.